Reading from the N-terminus, the 290-residue chain is Phosphonopyruvate hydrolase (290 aa).

A substrate-binding site is contributed by 40–44 (WGSGF). D54 functions as the Nucleophile in the catalytic mechanism. Mg(2+) is bound at residue D81. Substrate is bound by residues R155, H186, and R188.

Homodimer. Homotetramer. The cofactor is Co(2+). It depends on Mg(2+) as a cofactor. Requires Mn(2+) as cofactor.

It catalyses the reaction 3-phosphonopyruvate + H2O = pyruvate + phosphate + H(+). Partially inhibited by EDTA. Activity is restored by Co(2+), and to a lesser extent by Ni(2+) and Mg(2+). Unaffected by Cs(2+) and Ca(2+). Activity is reduced by Mn(2+) and Cu(2+). In terms of biological role, hydrolyzes phosphonopyruvate. Not active towards phosphoenolpyruvate, glycerophosphate, phospho-L-serine or phosphoglycolic acid. The chain is Phosphonopyruvate hydrolase from Variovorax sp. (strain Pal2).